The chain runs to 231 residues: Urease subunit gamma/beta (231 aa).

The tract at residues 1 to 101 (MLLTPTELER…LVTVHQPIRP (101 aa)) is urease gamma. The segment at 102-231 (GQLPLAVMPT…RARAQFFKGA (130 aa)) is urease beta.

It in the N-terminal section; belongs to the urease gamma subunit family. This sequence in the C-terminal section; belongs to the urease beta subunit family. As to quaternary structure, heterohexamer of 3 UreC (alpha) and 3 UreAB (gamma/beta) subunits.

It is found in the cytoplasm. It carries out the reaction urea + 2 H2O + H(+) = hydrogencarbonate + 2 NH4(+). Its pathway is nitrogen metabolism; urea degradation; CO(2) and NH(3) from urea (urease route): step 1/1. The chain is Urease subunit gamma/beta from Pseudomonas syringae pv. syringae (strain B728a).